A 754-amino-acid polypeptide reads, in one-letter code: Cytosolic neutral trehalase (754 aa).

Polar residues predominate over residues Met-1–Pro-10. 2 disordered regions span residues Met-1–Asn-47 and Thr-54–Pro-73. Positions 117, 119, 121, 123, and 128 each coordinate Ca(2+). Substrate is bound by residues Arg-305, Trp-312–Asp-313, Asn-349, Arg-358–Gln-360, Glu-427, Arg-476, and Gly-479. Residues Asp-481 and Glu-676 each act as proton donor/acceptor in the active site.

This sequence belongs to the glycosyl hydrolase 37 family. Requires Ca(2+) as cofactor.

The protein localises to the cytoplasm. It carries out the reaction alpha,alpha-trehalose + H2O = alpha-D-glucose + beta-D-glucose. It participates in carbohydrate degradation. Functionally, hydrolyzes intracellular trehalose to glucose. The disaccharide trehalose serves as a storage molecule for energy and carbohydrates that is mobilized during nutrient stress. The polypeptide is Cytosolic neutral trehalase (Kluyveromyces lactis (strain ATCC 8585 / CBS 2359 / DSM 70799 / NBRC 1267 / NRRL Y-1140 / WM37) (Yeast)).